We begin with the raw amino-acid sequence, 141 residues long: Galactose-6-phosphate isomerase subunit LacA (141 aa).

The protein belongs to the LacAB/RpiB family. Heteromultimeric protein consisting of LacA and LacB.

The enzyme catalyses aldehydo-D-galactose 6-phosphate = keto-D-tagatose 6-phosphate. It functions in the pathway carbohydrate metabolism; D-galactose 6-phosphate degradation; D-tagatose 6-phosphate from D-galactose 6-phosphate: step 1/1. The protein is Galactose-6-phosphate isomerase subunit LacA of Streptococcus pneumoniae (strain Taiwan19F-14).